The sequence spans 143 residues: Large ribosomal subunit protein uL15 (143 aa).

The tract at residues 20–52 is disordered; it reads GRGIGSGKGKTAGRGHKGQHSRAGGYHKVGFEG. Residues 30 to 39 are compositionally biased toward basic residues; sequence TAGRGHKGQH.

It belongs to the universal ribosomal protein uL15 family. As to quaternary structure, part of the 50S ribosomal subunit.

In terms of biological role, binds to the 23S rRNA. The chain is Large ribosomal subunit protein uL15 from Coxiella burnetii (strain CbuK_Q154) (Coxiella burnetii (strain Q154)).